Reading from the N-terminus, the 380-residue chain is Succinyl-diaminopimelate desuccinylase (380 aa).

Zn(2+) is bound at residue His69. Residue Asp71 is part of the active site. Asp102 provides a ligand contact to Zn(2+). Glu136 acts as the Proton acceptor in catalysis. 3 residues coordinate Zn(2+): Glu137, Glu165, and His351.

This sequence belongs to the peptidase M20A family. DapE subfamily. Homodimer. Requires Zn(2+) as cofactor. Co(2+) serves as cofactor.

It carries out the reaction N-succinyl-(2S,6S)-2,6-diaminopimelate + H2O = (2S,6S)-2,6-diaminopimelate + succinate. The protein operates within amino-acid biosynthesis; L-lysine biosynthesis via DAP pathway; LL-2,6-diaminopimelate from (S)-tetrahydrodipicolinate (succinylase route): step 3/3. Catalyzes the hydrolysis of N-succinyl-L,L-diaminopimelic acid (SDAP), forming succinate and LL-2,6-diaminopimelate (DAP), an intermediate involved in the bacterial biosynthesis of lysine and meso-diaminopimelic acid, an essential component of bacterial cell walls. This chain is Succinyl-diaminopimelate desuccinylase, found in Bordetella petrii (strain ATCC BAA-461 / DSM 12804 / CCUG 43448).